The following is a 1392-amino-acid chain: FERM and PDZ domain-containing protein 2 (1392 aa).

The KIND domain occupies 15–197; it reads VTLASALQVR…SEVERRVVEE (183 aa). The tract at residues 211–246 is disordered; it reads SRLHQADGESPGAPASDALQPRRVSERSAETQSSLE. In terms of domain architecture, FERM spans 342–642; sequence CVVLLNGRCL…WFNAQTGSKH (301 aa). One can recognise a PDZ 1 domain in the interval 775–861; sequence GLFGEPNQDI…MAVRMIQNSP (87 aa). The tract at residues 903 to 930 is disordered; sequence GRQSPHIHDQDRSVRGTEMAQGAGSCPP. Over residues 908-917 the composition is skewed to basic and acidic residues; the sequence is HIHDQDRSVR. Residues 937 to 1027 form an interaction with GRIN2A and GRIN2B region; it reads TGEIYFVELV…VARLVLERRG (91 aa). 2 PDZ domains span residues 950-1035 and 1079-1167; these read GTLG…PQCP and RGLG…PEME. The tract at residues 1186-1236 is disordered; that stretch reads CAGSEQSPSLDQEDNWRDSTSLDAGEGLSPGPESSYKDVRQVKGDREKERP. A compositionally biased stretch (basic and acidic residues) spans 1220–1236; it reads SYKDVRQVKGDREKERP.

In terms of assembly, interacts (via the second PDZ domain) with CTNND2 (via the extreme C-terminus). Interacts (via the second PDZ domain) with PKP4 (via the extreme C-terminus); the interaction directs FRMPD2 to the basolateral membranes. Interacts (via the second PDZ domain) with ARVCF (via the extreme C-terminus). Interacts (via the second PDZ domain) with NMDAR subunits GRIN2A/GLUN2A and GRIN2B/GLUN2B (via the extreme C-terminus); the interaction is direct and is likely to promote NMDAR-mediated neural signal transmission. Binds GRIN2A with lower affinity than GRIN2B. Interacts (via the third PDZ domain) with LRIT1 (via the extreme C-terminus); the interaction leads to their colocalization in photoreceptor synapses. Interacts with NOD2; the interaction is likely to trigger NOD2-mediated nuclear factor kappaB activation.

Its subcellular location is the cytoplasm. The protein localises to the postsynaptic density. It is found in the basolateral cell membrane. It localises to the cell junction. The protein resides in the tight junction. Its function is as follows. Functions as a scaffold protein and likely plays a role in N-methyl-D-aspartic acid receptor (NMDAR)-mediated synaptic excitatory transmission. May be involved in synapse formation in cone photoreceptor cells. May play a role in the regulation of tight junction formation. Binds phosphatidylinositol 3,4-bisphosphate (PtdIns(3,4)P2). May pNF-kappa-Blay a role in the regulation of NOD2-mediated NF-kappa-B activation in immune response. The sequence is that of FERM and PDZ domain-containing protein 2 from Mus musculus (Mouse).